The primary structure comprises 670 residues: Major fimbrium tip subunit FimD (670 aa).

The first 24 residues, 1-24 (MRTNRILNIICPPILFLLVGFLFG), serve as a signal peptide directing secretion. Residue Cys25 is the site of N-palmitoyl cysteine attachment. A lipid anchor (S-diacylglycerol cysteine) is attached at Cys25. The propeptide occupies 25 to 50 (CVREDIESDMNETSSLFLQVQPYNQR).

It belongs to the FimD family. Fimbriae are composed of a major, structural subunit and the minor components FimC, FimD and FimE. Identified in a complex composed of FimC, FimD and FimE (in vitro). The complex interacts with host extracellular matrix proteins, including fibronectin and type I collagen. Interacts with host CXCR4.

The protein resides in the fimbrium. The protein localises to the cell outer membrane. Probably a component of the fimbrium tip. These long, filamentous pili are attached to the cell surface; they mediate biofilm formation, adhesion onto host cells and onto other bacteria that are part of the oral microbiome. They play an important role in invasion of periodontal tissues and are major virulence factors. FimC, FimD and FimE contribute to interaction with host CXCR4 and thereby down-regulate the TLR2-mediated host immune response. This Porphyromonas gingivalis (strain ATCC 33277 / DSM 20709 / CIP 103683 / JCM 12257 / NCTC 11834 / 2561) protein is Major fimbrium tip subunit FimD.